Reading from the N-terminus, the 427-residue chain is 2-oxoglutarate and iron-dependent oxygenase JMJD4 (427 aa).

Positions 147–306 (SLVNDLEDIF…NMWHFLQQEL (160 aa)) constitute a JmjC domain. The Fe cation site is built by His-194, Asp-196, and His-274.

The protein belongs to the JMJD6 family. In terms of assembly, interacts with ETF1. Interacts with the ETF1-GSPT1 complex. The cofactor is Fe(2+).

The protein resides in the cytoplasm. It catalyses the reaction L-lysyl-[protein] + 2-oxoglutarate + O2 = 4-hydroxy-L-lysyl-[protein] + succinate + CO2. Catalyzes the 2-oxoglutarate and iron-dependent C4-lysyl hydroxylation of ETF1 at 'Lys-63' thereby promoting the translational termination efficiency of ETF1. Not essential for embryonic stem cell (ESC) maintenance and the embryonic and postnatal development. This Mus musculus (Mouse) protein is 2-oxoglutarate and iron-dependent oxygenase JMJD4 (Jmjd4).